Reading from the N-terminus, the 530-residue chain is Bifunctional purine biosynthesis protein PurH (530 aa).

Positions 1 to 149 constitute an MGS-like domain; the sequence is MASDFLPVHR…KNFARVAVAT (149 aa).

Belongs to the PurH family.

It catalyses the reaction (6R)-10-formyltetrahydrofolate + 5-amino-1-(5-phospho-beta-D-ribosyl)imidazole-4-carboxamide = 5-formamido-1-(5-phospho-D-ribosyl)imidazole-4-carboxamide + (6S)-5,6,7,8-tetrahydrofolate. It carries out the reaction IMP + H2O = 5-formamido-1-(5-phospho-D-ribosyl)imidazole-4-carboxamide. The protein operates within purine metabolism; IMP biosynthesis via de novo pathway; 5-formamido-1-(5-phospho-D-ribosyl)imidazole-4-carboxamide from 5-amino-1-(5-phospho-D-ribosyl)imidazole-4-carboxamide (10-formyl THF route): step 1/1. It participates in purine metabolism; IMP biosynthesis via de novo pathway; IMP from 5-formamido-1-(5-phospho-D-ribosyl)imidazole-4-carboxamide: step 1/1. In Xylella fastidiosa (strain M12), this protein is Bifunctional purine biosynthesis protein PurH.